Consider the following 782-residue polypeptide: Protein VAC14 homolog (782 aa).

At M1 the chain carries N-acetylmethionine. HEAT repeat units follow at residues K5–A42, L89–G126, F171–I208, and D212–K249. T11 is subject to Phosphothreonine. 2 disordered regions span residues E335 to C372 and S471 to S517. An HEAT 5 repeat occupies R438–G475. The span at D478–L488 shows a compositional bias: low complexity. T499 bears the Phosphothreonine mark. The span at L506–S517 shows a compositional bias: polar residues. At S517 the chain carries Phosphoserine. The HEAT 6 repeat unit spans residues L560–E598. S743 is subject to Phosphoserine. The tract at residues G773–D777 is mediates interaction with the PDZ domain of NOS1.

Belongs to the VAC14 family. As to quaternary structure, forms pentamers. Component of the PI(3,5)P2 regulatory complex/PAS complex, at least composed of PIKFYVE, FIG4 and VAC14. VAC14 nucleates the assembly of the complex and serves as a scaffold by pentamerizing into a star-shaped structure, which can bind a single copy each of PIKFYVE and FIG4 and coordinates their activities. Interacts with NOS1. In terms of assembly, (Microbial infection) Interacts with HTLV-1 Tax. Ubiquitously expressed.

It is found in the endosome membrane. The protein resides in the microsome membrane. In terms of biological role, scaffold protein component of the PI(3,5)P2 regulatory complex which regulates both the synthesis and turnover of phosphatidylinositol 3,5-bisphosphate (PtdIns(3,5)P2). Pentamerizes into a star-shaped structure and nucleates the assembly of the complex. The pentamer binds a single copy each of PIKFYVE and FIG4 and coordinates both PIKfyve kinase activity and FIG4 phosphatase activity, being required to maintain normal levels of phosphatidylinositol 3-phosphate (PtdIns(3)P) and phosphatidylinositol 5-phosphate (PtdIns(5)P). Plays a role in the biogenesis of endosome carrier vesicles (ECV) / multivesicular bodies (MVB) transport intermediates from early endosomes. In Homo sapiens (Human), this protein is Protein VAC14 homolog (VAC14).